The following is a 167-amino-acid chain: Ureidoglycolate lyase (167 aa).

This sequence belongs to the ureidoglycolate lyase family. As to quaternary structure, homodimer. It depends on Ni(2+) as a cofactor.

The enzyme catalyses (S)-ureidoglycolate = urea + glyoxylate. It functions in the pathway nitrogen metabolism; (S)-allantoin degradation. Functionally, catalyzes the catabolism of the allantoin degradation intermediate (S)-ureidoglycolate, generating urea and glyoxylate. Involved in the utilization of allantoin as nitrogen source. The polypeptide is Ureidoglycolate lyase (Pseudomonas fluorescens (strain SBW25)).